A 7152-amino-acid chain; its full sequence is Replicase polyprotein 1ab (7152 aa).

The region spanning 54–174 (YDNHVKIDCR…HKWFQFCRLY (121 aa)) is the CoV Nsp1 globular domain. The region spanning 192–222 (FSVEDAYAEVHAEPKGKYSQKAYALLRQYRG) is the BetaCoV Nsp1 C-terminal domain. Positions 226–488 (VLFVDQYGCD…LITHALYLDY (263 aa)) constitute a CoV Nsp2 N-terminal domain. Residues cysteine 365, cysteine 370, cysteine 386, and cysteine 389 each coordinate Zn(2+). The C4 stretch occupies residues 365–389 (CFNDNCDFYGWVSGNMMDGFSCPLC). The 189-residue stretch at 493–681 (CGNLEQNHIL…VNKFYTFFKL (189 aa)) folds into the CoV Nsp2 middle domain. Residues 697–809 (LKTINGLVCI…LDQAWRFPCA (113 aa)) enclose the CoV Nsp2 C-terminal domain. Positions 811–923 (RKVNFNEKPV…MYCTFAIEDV (113 aa)) constitute a Ubiquitin-like 1 domain. A run of 11 repeats spans residues 945 to 954 (NDDEDVVTGD), 955 to 964 (NDDEDVVTGD), 965 to 974 (NDDEDVVTGD), 975 to 984 (NDDEDVVTGD), 985 to 994 (NDDEDVVTGD), 995 to 1004 (NDDEDVVTGD), 1005 to 1014 (NDDEDVVTGD), 1015 to 1024 (NDDEDVVTGD), 1025 to 1034 (NDDEDVVTGD), 1035 to 1044 (NDDEDVVTGD), and 1045 to 1054 (NDDEDVVTGD). Residues 945–1054 (NDDEDVVTGD…NDDEDVVTGD (110 aa)) are 11 X 10 AA tandem repeat of N-[DN]-D-E-D-V-V-T-G-D. Residues 947 to 1036 (DEDVVTGDND…DEDVVTGDND (90 aa)) are disordered. Residues 1093–1343 (VFNDVYNDAL…VCFVKGDIIN (251 aa)) enclose the Peptidase C16 1 domain. Cysteine 1131 serves as the catalytic For PL1-PRO activity. Residues cysteine 1208, cysteine 1211, cysteine 1234, and cysteine 1236 each contribute to the Zn(2+) site. A C4-type 1 zinc finger spans residues 1208–1236 (CLKCGFSFDLNGLDAVFFYGDIVSHVCKC). Residues histidine 1282 and aspartate 1293 each act as for PL1-PRO activity in the active site. The Macro domain maps to 1321 to 1492 (ELAQLYGLCI…IIQKCQITSV (172 aa)). Positions 1548 to 1619 (NDVRDYLLSK…TVNQVCVLLA (72 aa)) constitute a DPUP domain. Residues 1619 to 1674 (AKKIDVLLTVDGVNFKSISLTVGEVFGKILGNVFCDGIDVTKLKCSDFYADKILYQ) form the Ubiquitin-like 2 domain. Positions 1688 to 1948 (SSFGFDQQQL…MVAYNPDLSQ (261 aa)) constitute a Peptidase C16 2 domain. Catalysis depends on cysteine 1727, which acts as the For PL2-PRO activity. 4 residues coordinate Zn(2+): cysteine 1805, cysteine 1807, cysteine 1839, and cysteine 1841. The C4-type 2 zinc-finger motif lies at 1805-1841 (CDCGIKQESRVGVDAVMHFGTLAKTDLFNGYKIGCNC). Active-site for PL2-PRO activity residues include histidine 1884 and aspartate 1898. Positions 1962–2063 (IKAQFKPFAK…TYFNKPSFKS (102 aa)) constitute a Nucleic acid-binding domain. The G2M domain maps to 2078-2227 (ESQGNVVTSV…NDKTIFYTTE (150 aa)). A run of 3 helical transmembrane segments spans residues 2196-2216 (AIEF…LLHF), 2257-2277 (FLVV…NVIF), and 2288-2308 (FPIF…LVTI). Residues 2196–2433 (AIEFYGFLKW…FVLLRFYIVV (238 aa)) form an HD1 region. The 3Ecto domain maps to 2293 to 2354 (GRIVMWIKAT…AIDFVQYEVD (62 aa)). 2 disulfide bridges follow: cysteine 2309-cysteine 2333 and cysteine 2324-cysteine 2330. 2 helical membrane-spanning segments follow: residues 2371–2391 (LVIG…LIGL) and 2413–2433 (FIVF…YIVV). The segment at 2441-2531 (GFIRHIVYGC…ELKRPVNPTD (91 aa)) is Y1. One can recognise a CoV Nsp3 Y domain in the interval 2441–2808 (GFIRHIVYGC…LTTPFSLKGG (368 aa)). The Zn(2+) site is built by histidine 2445, cysteine 2450, cysteine 2455, cysteine 2458, cysteine 2491, histidine 2494, cysteine 2498, and cysteine 2501. The ZF1 stretch occupies residues 2445-2458 (HIVYGCNKAGCLFC). The ZF2 stretch occupies residues 2491-2501 (CVKHQWNCFNC). A Y2 region spans residues 2532–2624 (ASHYVVTDIK…LVDKKLITTA (93 aa)). The tract at residues 2532–2808 (ASHYVVTDIK…LTTPFSLKGG (277 aa)) is coV-Y. The Y3 stretch occupies residues 2625–2707 (CNGISVTQTM…KSMISAVAAG (83 aa)). The Y4 stretch occupies residues 2708-2808 (LEFTDENYNN…LTTPFSLKGG (101 aa)). A run of 5 helical transmembrane segments spans residues 2814 to 2834 (LLYI…ALLP), 3089 to 3109 (ASSI…YYLI), 3121 to 3141 (VVVI…VFQV), 3148 to 3168 (VYAC…SVIM), and 3173 to 3193 (IVMY…AMVI). An HD2 region spans residues 2814–3193 (LLYILFFISL…FCVTYVAMVI (380 aa)). Positions 3207-3304 (IGVNVCNDST…TASVSTSFLQ (98 aa)) constitute a Nsp4C domain. The region spanning 3305-3607 (SGIVKMVSPT…YQQLAGVKLQ (303 aa)) is the Peptidase C30 domain. Residues histidine 3345 and cysteine 3449 each act as for 3CL-PRO activity in the active site. Transmembrane regions (helical) follow at residues 3621 to 3641 (ILIS…WTIF), 3646 to 3666 (THMI…MLLV), 3671 to 3691 (FYLT…NYLV), 3714 to 3734 (FTYV…IFIT), 3742 to 3762 (IFSL…WYFG), 3770 to 3790 (LLFI…SLAI), and 3813 to 3833 (LILL…GFFS). An HD3 region spans residues 3621 to 3833 (ILISTFLFSC…ILSCYWGFFS (213 aa)). Residues 3895–3983 (SKLTDVKCAN…DYVQDSTVLQ (89 aa)) form the RdRp Nsp7 cofactor domain. Residues 3984-4180 (ALQSEFVNMA…YNEVANAVMQ (197 aa)) enclose the RdRp Nsp8 cofactor domain. The 110-residue stretch at 4181–4290 (NNELMPHKLK…GTLSSTIRLQ (110 aa)) folds into the Nsp9 ssRNA-binding domain. Positions 4291 to 4428 (AGVATEYAAN…CVGSGVAVQS (138 aa)) constitute an ExoN/MTase coactivator domain. Zn(2+)-binding residues include cysteine 4364, cysteine 4367, histidine 4373, cysteine 4380, cysteine 4406, cysteine 4409, cysteine 4417, and cysteine 4419. Zinc fingers lie at residues 4364–4380 (CIYC…DGLC) and 4406–4419 (CQVC…SCSC). Positions 4433-4688 (FLNRVRGTSV…DCELFVNDSY (256 aa)) constitute a NiRAN domain. Asparagine 4636 and aspartate 4645 together coordinate Mn(2+). The Nsp12 Interface domain maps to 4689 to 4787 (RQFDLVQYDF…MNLDVDTHRY (99 aa)). Zn(2+) is bound by residues histidine 4718, cysteine 4724, cysteine 4729, cysteine 4733, and cysteine 4910. One can recognise a Nsp12 RNA-dependent RNA polymerase domain in the interval 4788 to 5355 (RLSLKDLLLY…NMYLKSAVMQ (568 aa)). A rdRp Fingers N-ter region spans residues 4790-5004 (SLKDLLLYAA…HQKCLKSIAA (215 aa)). The rdRp Palm N-ter stretch occupies residues 5005–5043 (TRGVPVVIGTTKFYGGWDDMLRHLIKDVDNPVLMGWDYP). Residues 5035–5197 (PVLMGWDYPK…CYNSDYASKG (163 aa)) enclose the RdRp catalytic domain. The rdRp Fingers C-ter stretch occupies residues 5044-5102 (KCDRAMPNILRIVSSLVLARKHEFCCSHGDRFYRLANECAQVLSEIVMCGGCYYVKPGG). Zn(2+) is bound by residues histidine 5065, cysteine 5068, and cysteine 5069. The rdRp Palm C-ter stretch occupies residues 5103-5238 (TSSGDATTAF…TNGPHEFCSQ (136 aa)). Catalysis depends on residues serine 5182, aspartate 5183, and aspartate 5184. Residues 5239-5355 (HTMLVKIDGD…NMYLKSAVMQ (117 aa)) are rdRp Thumb. The CV ZBD domain occupies 5356–5468 (SVGACVVCSS…DDFNKIASCK (113 aa)). 12 residues coordinate Zn(2+): cysteine 5360, cysteine 5363, cysteine 5371, cysteine 5374, cysteine 5381, cysteine 5384, histidine 5388, histidine 5394, cysteine 5405, cysteine 5410, cysteine 5427, and histidine 5430. Positions 5611-5792 (SVPLLFQTNV…MCCLGPDIFL (182 aa)) constitute a (+)RNA virus helicase ATP-binding domain. Residue 5636-5643 (GPPGTGKS) participates in ATP binding. Residues 5793–5962 (GNCYRCPKEI…TLSRLHCTTN (170 aa)) enclose the (+)RNA virus helicase C-terminal domain. The region spanning 6029 to 6244 (FFITKDEAIK…RCLAIYDCFC (216 aa)) is the ExoN domain. Catalysis depends on residues aspartate 6047, glutamate 6049, and glutamate 6148. Zn(2+) is bound by residues cysteine 6164, cysteine 6167, cysteine 6183, histidine 6186, histidine 6214, cysteine 6218, and histidine 6221. Residues histidine 6225 and aspartate 6230 contribute to the active site. Zn(2+) is bound at residue cysteine 6236. The region spanning 6253 to 6479 (YPIISNEVSI…NLWNTFTMLQ (227 aa)) is the N7-MTase domain. 6288 to 6294 (DIGNPKG) serves as a coordination point for S-adenosyl-L-methionine. A gpppA-binding region spans residues 6366–6380 (CNGGSLYVNKHAFHT). Zn(2+)-binding residues include cysteine 6404, cysteine 6425, cysteine 6436, and histidine 6439. A Nsp15 N-terminal oligomerization domain is found at 6480–6540 (SLENVIYNLV…NIAVELFTKR (61 aa)). One can recognise an AV-Nsp11N/CoV-Nsp15M domain in the interval 6541–6661 (SIRHHPELKI…FAMRKDGDDV (121 aa)). The 140-residue stretch at 6711 to 6850 (EPRSDLERDF…NDNKIMTFYP (140 aa)) folds into the NendoU domain. Residues histidine 6741, histidine 6756, lysine 6796, lysine 6899, aspartate 6983, lysine 7023, and glutamate 7056 contribute to the active site. The Nidovirus-type SAM-dependent 2'-O-MTase domain maps to 6855–7149 (TSDWKPGYSM…KEIFVGDSLV (295 aa)).

This sequence belongs to the coronaviruses polyprotein 1ab family. As to quaternary structure, interacts with host PHB and PHB2. Interacts with papain-like protease nsp3 and non-structural protein 6. In terms of assembly, monomer. Homodimer. Only the homodimer shows catalytic activity. As to quaternary structure, interacts with nsp8 and nsp12 to form the replication-transcription complex (RTC): nsp12, nsp7, two subunits of nsp8, and up to two subunits of nsp13. Interacts with nsp7, nsp13 and nsp12 to form the replication-transcription complex (RTC): nsp12, nsp7, two subunits of nsp8, and up to two subunits of nsp13. In terms of assembly, interacts with nsp12. As to quaternary structure, interacts with proofreading exoribonuclease nsp14 and 2'-O-methyltransferase nsp16; these interactions enhance nsp14 and nsp16 enzymatic activities. Interacts with nsp7 and nsp8 to form the replication-transcription complex (RTC): nsp12, nsp7, two subunits of nsp8, and up to two subunits of nsp13. Interacts with nsp9. In terms of assembly, interacts with nsp8 to form the replication-transcription complex (RTC): nsp12, nsp7, two subunits of nsp8, and up to two subunits of nsp13. Requires Mn(2+) as cofactor. Mg(2+) serves as cofactor. Post-translationally, specific enzymatic cleavages in vivo by its own proteases yield mature proteins. 3CL-PRO and PL-PRO proteinases are autocatalytically processed.

It localises to the host membrane. It is found in the host cytoplasm. The protein localises to the host perinuclear region. Its subcellular location is the host endoplasmic reticulum-Golgi intermediate compartment. It carries out the reaction RNA(n) + a ribonucleoside 5'-triphosphate = RNA(n+1) + diphosphate. It catalyses the reaction ATP + H2O = ADP + phosphate + H(+). The enzyme catalyses Thiol-dependent hydrolysis of ester, thioester, amide, peptide and isopeptide bonds formed by the C-terminal Gly of ubiquitin (a 76-residue protein attached to proteins as an intracellular targeting signal).. The catalysed reaction is a 5'-end (N(7)-methyl 5'-triphosphoguanosine)-ribonucleoside in mRNA + S-adenosyl-L-methionine = a 5'-end (N(7)-methyl 5'-triphosphoguanosine)-(2'-O-methyl-ribonucleoside) in mRNA + S-adenosyl-L-homocysteine + H(+). It carries out the reaction uridylyl-uridylyl-ribonucleotide-RNA = a 3'-end uridylyl-2',3'-cyclophospho-uridine-RNA + a 5'-end dephospho-ribonucleoside-RNA. It catalyses the reaction a 5'-end diphospho-ribonucleoside in mRNA + GTP + H(+) = a 5'-end (5'-triphosphoguanosine)-ribonucleoside in mRNA + diphosphate. The enzyme catalyses a 5'-end (5'-triphosphoguanosine)-ribonucleoside in mRNA + S-adenosyl-L-methionine = a 5'-end (N(7)-methyl 5'-triphosphoguanosine)-ribonucleoside in mRNA + S-adenosyl-L-homocysteine. In terms of biological role, the replicase polyprotein of coronaviruses is a multifunctional protein: it contains the activities necessary for the transcription of negative stranded RNA, leader RNA, subgenomic mRNAs and progeny virion RNA as well as proteinases responsible for the cleavage of the polyprotein into functional products. Its function is as follows. Inhibits host translation by interacting with the 40S ribosomal subunit. The nsp1-40S ribosome complex further induces an endonucleolytic cleavage near the 5'UTR of host mRNAs, targeting them for degradation. Viral mRNAs are not susceptible to nsp1-mediated endonucleolytic RNA cleavage thanks to the presence of a 5'-end leader sequence and are therefore protected from degradation. By suppressing host gene expression, nsp1 facilitates efficient viral gene expression in infected cells and evasion from host immune response. Functionally, may play a role in the modulation of host cell survival signaling pathway by interacting with host PHB and PHB2. Indeed, these two proteins play a role in maintaining the functional integrity of the mitochondria and protecting cells from various stresses. Responsible for the cleavages located at the N-terminus of the replicase polyprotein. In addition, PL-PRO possesses a deubiquitinating/deISGylating activity and processes both 'Lys-48'- and 'Lys-63'-linked polyubiquitin chains from cellular substrates. Participates together with nsp4 in the assembly of virally-induced cytoplasmic double-membrane vesicles necessary for viral replication. Antagonizes innate immune induction of type I interferon by blocking the phosphorylation, dimerization and subsequent nuclear translocation of host IRF3. Also prevents host NF-kappa-B signaling. In terms of biological role, participates in the assembly of virally-induced cytoplasmic double-membrane vesicles necessary for viral replication. Its function is as follows. Cleaves the C-terminus of replicase polyprotein at 11 sites. Recognizes substrates containing the core sequence [ILMVF]-Q-|-[SGACN]. Also able to bind an ADP-ribose-1''-phosphate (ADRP). Functionally, plays a role in the initial induction of autophagosomes from host endoplasmic reticulum. Later, limits the expansion of these phagosomes that are no longer able to deliver viral components to lysosomes. Forms a hexadecamer with nsp8 (8 subunits of each) that may participate in viral replication by acting as a primase. Alternatively, may synthesize substantially longer products than oligonucleotide primers. In terms of biological role, forms a hexadecamer with nsp7 (8 subunits of each) that may participate in viral replication by acting as a primase. Alternatively, may synthesize substantially longer products than oligonucleotide primers. Its function is as follows. Forms a primer, NSP9-pU, which is utilized by the polymerase for the initiation of RNA chains. Interacts with ribosome signal recognition particle RNA (SRP). Together with NSP8, suppress protein integration into the cell membrane, thereby disrupting host immune defenses. Functionally, plays a pivotal role in viral transcription by stimulating both nsp14 3'-5' exoribonuclease and nsp16 2'-O-methyltransferase activities. Therefore plays an essential role in viral mRNAs cap methylation. RNA-directed RNA polymerase that catalyzes the transcription of viral genomic and subgenomic RNAs. Acts in complex with nsp7 and nsp8 to transcribe both the minus and positive strands of genomic RNA. The kinase-like NiRAN domain of NSP12 attaches one or more nucleotides to the amino terminus of NSP9, forming a covalent RNA-protein intermediate that serves as transcription/replication primer. Subgenomic RNAs (sgRNAs) are formed by discontinuous transcription: The polymerase has the ability to pause at transcription-regulating sequences (TRS) and jump to the leader TRS, resulting in a major deletion. This creates a series of subgenomic RNAs that are replicated, transcribed and translated. In addition, Nsp12 is a subunit of the viral RNA capping enzyme that catalyzes the RNA guanylyltransferase reaction for genomic and sub-genomic RNAs. Subsequently, the NiRAN domain transfers RNA to GDP, and forms the core cap structure GpppA-RNA. In terms of biological role, multi-functional protein with a zinc-binding domain in N-terminus displaying RNA and DNA duplex-unwinding activities with 5' to 3' polarity. Activity of helicase is dependent on magnesium. Its function is as follows. Plays a role in viral RNA synthesis through two distinct activities. The N7-guanine methyltransferase activity plays a role in the formation of the cap structure GpppA-RNA. The proofreading exoribonuclease reduces the sensitivity of the virus to RNA mutagens during replication. This activity acts on both ssRNA and dsRNA in a 3'-5' direction. Functionally, plays a role in viral transcription/replication and prevents the simultaneous activation of host cell dsRNA sensors, such as MDA5/IFIH1, OAS, and PKR. Acts by degrading the 5'-polyuridines generated during replication of the poly(A) region of viral genomic and subgenomic RNAs. Catalyzes a two-step reaction in which a 2'3'-cyclic phosphate (2'3'-cP) is first generated by 2'-O transesterification, which is then hydrolyzed to a 3'-phosphate (3'-P). If not degraded, poly(U) RNA would hybridize with poly(A) RNA tails and activate host dsRNA sensors. Methyltransferase that mediates mRNA cap 2'-O-ribose methylation to the 5'-cap structure of viral mRNAs. N7-methyl guanosine cap is a prerequisite for binding of nsp16. Therefore plays an essential role in viral mRNAs cap methylation which is essential to evade immune system. This chain is Replicase polyprotein 1ab (rep), found in Homo sapiens (Human).